The following is a 46-amino-acid chain: Iota-conotoxin RXIA (46 aa).

4-hydroxyproline; partial occurs at positions 2 and 11. Disulfide bonds link Cys5–Cys19, Cys12–Cys22, Cys18–Cys27, and Cys21–Cys38. Residue Pro29 is modified to 4-hydroxyproline. Phe44 carries the post-translational modification D-phenylalanine.

The protein belongs to the conotoxin I1 superfamily. The natural D-Phe-44 form of the peptide is more potent than the L-Phe-44 form. Expressed by the venom duct.

Its subcellular location is the secreted. In terms of biological role, iota-conotoxins bind to voltage-gated sodium channels and act as agonists by shifting the voltage-dependence of activation to more hyperpolarized levels. This toxin acts on Nav1.6/SCN8A &gt; Nav1.2/SCN2A &gt; Nav1.7/SCN9A sodium channels. Produces general excitatory symptoms upon intracorporeal injection and repetitive action potentials in the frog cutaneous pectoris muscle. Natural peptide (with D-Phe) is active on nerve, but not on muscle. Synthetic peptide (with L-Phe) is not active on both nerve and muscle. This chain is Iota-conotoxin RXIA, found in Conus radiatus (Rayed cone).